The following is a 411-amino-acid chain: Serine hydroxymethyltransferase (411 aa).

(6S)-5,6,7,8-tetrahydrofolate-binding positions include L113 and 117–119; that span reads GHL. K222 is modified (N6-(pyridoxal phosphate)lysine). 346–348 contacts (6S)-5,6,7,8-tetrahydrofolate; the sequence is SPF.

Belongs to the SHMT family. As to quaternary structure, homodimer. It depends on pyridoxal 5'-phosphate as a cofactor.

The protein resides in the cytoplasm. It catalyses the reaction (6R)-5,10-methylene-5,6,7,8-tetrahydrofolate + glycine + H2O = (6S)-5,6,7,8-tetrahydrofolate + L-serine. It functions in the pathway one-carbon metabolism; tetrahydrofolate interconversion. Its pathway is amino-acid biosynthesis; glycine biosynthesis; glycine from L-serine: step 1/1. Catalyzes the reversible interconversion of serine and glycine with tetrahydrofolate (THF) serving as the one-carbon carrier. This reaction serves as the major source of one-carbon groups required for the biosynthesis of purines, thymidylate, methionine, and other important biomolecules. Also exhibits THF-independent aldolase activity toward beta-hydroxyamino acids, producing glycine and aldehydes, via a retro-aldol mechanism. The protein is Serine hydroxymethyltransferase of Prochlorococcus marinus (strain NATL2A).